Reading from the N-terminus, the 92-residue chain is Large ribosomal subunit protein eL43 (92 aa).

Cys39, Cys42, Cys57, and Cys60 together coordinate Zn(2+). The C4-type zinc finger occupies 39–60 (CSFCGKTKMKRKAVGIWHCGSC).

The protein belongs to the eukaryotic ribosomal protein eL43 family. Component of the large ribosomal subunit.

Its subcellular location is the cytoplasm. In terms of biological role, component of the large ribosomal subunit. The ribosome is a large ribonucleoprotein complex responsible for the synthesis of proteins in the cell. This chain is Large ribosomal subunit protein eL43 (RPL37A), found in Gallus gallus (Chicken).